The chain runs to 76 residues: ATP synthase subunit c (76 aa).

2 consecutive transmembrane segments (helical) span residues 12 to 32 and 54 to 74; these read LGSI…GIIF and ILGF…PFVY.

The protein belongs to the ATPase C chain family. In terms of assembly, F-type ATPases have 2 components, F(1) - the catalytic core - and F(0) - the membrane proton channel. F(1) has five subunits: alpha(3), beta(3), gamma(1), delta(1), epsilon(1). F(0) has three main subunits: a(1), b(2) and c(10-14). The alpha and beta chains form an alternating ring which encloses part of the gamma chain. F(1) is attached to F(0) by a central stalk formed by the gamma and epsilon chains, while a peripheral stalk is formed by the delta and b chains.

It is found in the cell membrane. F(1)F(0) ATP synthase produces ATP from ADP in the presence of a proton or sodium gradient. F-type ATPases consist of two structural domains, F(1) containing the extramembraneous catalytic core and F(0) containing the membrane proton channel, linked together by a central stalk and a peripheral stalk. During catalysis, ATP synthesis in the catalytic domain of F(1) is coupled via a rotary mechanism of the central stalk subunits to proton translocation. In terms of biological role, key component of the F(0) channel; it plays a direct role in translocation across the membrane. A homomeric c-ring of between 10-14 subunits forms the central stalk rotor element with the F(1) delta and epsilon subunits. This Streptomyces coelicolor (strain ATCC BAA-471 / A3(2) / M145) protein is ATP synthase subunit c.